A 220-amino-acid polypeptide reads, in one-letter code: Guanylate kinase (220 aa).

The region spanning 16–195 (GLMFVLSSPS…AFESVKAILR (180 aa)) is the Guanylate kinase-like domain. Residue 23-30 (SPSGAGKT) coordinates ATP.

Belongs to the guanylate kinase family.

Its subcellular location is the cytoplasm. It carries out the reaction GMP + ATP = GDP + ADP. Its function is as follows. Essential for recycling GMP and indirectly, cGMP. In Rhodopseudomonas palustris (strain HaA2), this protein is Guanylate kinase.